Reading from the N-terminus, the 118-residue chain is Small nuclear ribonucleoprotein Sm D2 (118 aa).

Residues 1-31 (MSLLNKPKSEMTPEELQKREEEEFNTGPLSV) form a disordered region. At Ser2 the chain carries N-acetylserine. Residues Lys6 and Lys8 each participate in a glycyl lysine isopeptide (Lys-Gly) (interchain with G-Cter in SUMO2) cross-link. The span at 7-21 (PKSEMTPEELQKREE) shows a compositional bias: basic and acidic residues. The residue at position 9 (Ser9) is a Phosphoserine. Thr12 carries the post-translational modification Phosphothreonine. The Sm domain occupies 29 to 115 (LSVLTQSVKN…VIVVLRNPLI (87 aa)).

It belongs to the snRNP core protein family. Core component of the spliceosomal U1, U2, U4 and U5 small nuclear ribonucleoproteins (snRNPs), the building blocks of the spliceosome. Most spliceosomal snRNPs contain a common set of Sm proteins, SNRPB, SNRPD1, SNRPD2, SNRPD3, SNRPE, SNRPF and SNRPG that assemble in a heptameric protein ring on the Sm site of the small nuclear RNA to form the core snRNP. Component of the U1 snRNP. The U1 snRNP is composed of the U1 snRNA and the 7 core Sm proteins SNRPB, SNRPD1, SNRPD2, SNRPD3, SNRPE, SNRPF and SNRPG, and at least three U1 snRNP-specific proteins SNRNP70/U1-70K, SNRPA/U1-A and SNRPC/U1-C. Component of the U4/U6-U5 tri-snRNP complex composed of the U4, U6 and U5 snRNAs and at least PRPF3, PRPF4, PRPF6, PRPF8, PRPF31, SNRNP200, TXNL4A, SNRNP40, SNRPB, SNRPD1, SNRPD2, SNRPD3, SNRPE, SNRPF, SNRPG, DDX23, CD2BP2, PPIH, SNU13, EFTUD2, SART1 and USP39, plus LSM2, LSM3, LSM4, LSM5, LSM6, LSM7 and LSM8. Component of the minor spliceosome, which splices U12-type introns. Part of the SMN-Sm complex that contains SMN1, GEMIN2/SIP1, DDX20/GEMIN3, GEMIN4, GEMIN5, GEMIN6, GEMIN7, GEMIN8, STRAP/UNRIP and the Sm proteins SNRPB, SNRPD1, SNRPD2, SNRPD3, SNRPE, SNRPF and SNRPG; catalyzes core snRNPs assembly. Forms a 6S pICln-Sm complex composed of CLNS1A/pICln, SNRPD1, SNRPD2, SNRPE, SNRPF and SNRPG; ring-like structure where CLNS1A/pICln mimics additional Sm proteins and which is unable to assemble into the core snRNP. Interacts with SMN1; the interaction is direct. Interacts with GEMIN2; the interaction is direct. Interacts with SNRPD1; the interaction is direct. Interacts with SNRPF; the interaction is direct.

It localises to the cytoplasm. The protein resides in the cytosol. The protein localises to the nucleus. Plays a role in pre-mRNA splicing as a core component of the spliceosomal U1, U2, U4 and U5 small nuclear ribonucleoproteins (snRNPs), the building blocks of the spliceosome. Component of both the pre-catalytic spliceosome B complex and activated spliceosome C complexes. As a component of the minor spliceosome, involved in the splicing of U12-type introns in pre-mRNAs. The sequence is that of Small nuclear ribonucleoprotein Sm D2 (SNRPD2) from Homo sapiens (Human).